The sequence spans 112 residues: T cell receptor alpha variable 34 (112 aa).

A signal peptide spans 1-21 (METVLQVLLGILGFQAAWVSS). One can recognise an Ig-like domain in the interval 22–112 (QELEQSPQSL…HAGIYLCGAD (91 aa)). Asn-38 and Asn-42 each carry an N-linked (GlcNAc...) asparagine glycan. Cys-43 and Cys-109 are oxidised to a cystine.

As to quaternary structure, alpha-beta TR is a heterodimer composed of an alpha and beta chain; disulfide-linked. The alpha-beta TR is associated with the transmembrane signaling CD3 coreceptor proteins to form the TR-CD3 (TcR or TCR). The assembly of alpha-beta TR heterodimers with CD3 occurs in the endoplasmic reticulum where a single alpha-beta TR heterodimer associates with one CD3D-CD3E heterodimer, one CD3G-CD3E heterodimer and one CD247 homodimer forming a stable octameric structure. CD3D-CD3E and CD3G-CD3E heterodimers preferentially associate with TR alpha and TR beta chains, respectively. The association of the CD247 homodimer is the last step of TcR assembly in the endoplasmic reticulum and is required for transport to the cell surface.

It localises to the cell membrane. Its function is as follows. V region of the variable domain of T cell receptor (TR) alpha chain that participates in the antigen recognition. Alpha-beta T cell receptors are antigen specific receptors which are essential to the immune response and are present on the cell surface of T lymphocytes. Recognize peptide-major histocompatibility (MH) (pMH) complexes that are displayed by antigen presenting cells (APC), a prerequisite for efficient T cell adaptive immunity against pathogens. Binding of alpha-beta TR to pMH complex initiates TR-CD3 clustering on the cell surface and intracellular activation of LCK that phosphorylates the ITAM motifs of CD3G, CD3D, CD3E and CD247 enabling the recruitment of ZAP70. In turn ZAP70 phosphorylates LAT, which recruits numerous signaling molecules to form the LAT signalosome. The LAT signalosome propagates signal branching to three major signaling pathways, the calcium, the mitogen-activated protein kinase (MAPK) kinase and the nuclear factor NF-kappa-B (NF-kB) pathways, leading to the mobilization of transcription factors that are critical for gene expression and essential for T cell growth and differentiation. The T cell repertoire is generated in the thymus, by V-(D)-J rearrangement. This repertoire is then shaped by intrathymic selection events to generate a peripheral T cell pool of self-MH restricted, non-autoaggressive T cells. Post-thymic interaction of alpha-beta TR with the pMH complexes shapes TR structural and functional avidity. The polypeptide is T cell receptor alpha variable 34 (Homo sapiens (Human)).